Reading from the N-terminus, the 101-residue chain is Apolipoprotein C-II (101 aa).

The first 22 residues, Met-1–Gly-22, serve as a signal peptide directing secretion. A propeptide spans Ala-23 to Gln-28 (removed in mature form). The interval Ala-66–Leu-74 is lipid binding. The lipoprotein lipase cofactor stretch occupies residues Ser-78 to Glu-101.

This sequence belongs to the apolipoprotein C2 family. Proapolipoprotein C-II is synthesized as a sialic acid containing glycoprotein which is subsequently desialylated prior to its proteolytic processing. Post-translationally, proapolipoprotein C-II, the major form found in plasma undergoes proteolytic cleavage of its N-terminal hexapeptide to generate apolipoprotein C-II, which occurs as the minor form in plasma.

It is found in the secreted. In terms of biological role, component of chylomicrons, very low-density lipoproteins (VLDL), low-density lipoproteins (LDL), and high-density lipoproteins (HDL) in plasma. Plays an important role in lipoprotein metabolism as an activator of lipoprotein lipase. Both proapolipoprotein C-II and apolipoprotein C-II can activate lipoprotein lipase. The chain is Apolipoprotein C-II (APOC2) from Papio anubis (Olive baboon).